Here is a 510-residue protein sequence, read N- to C-terminus: ATP synthase subunit alpha (510 aa).

169–176 (GDRQTGKT) contacts ATP.

This sequence belongs to the ATPase alpha/beta chains family. F-type ATPases have 2 components, CF(1) - the catalytic core - and CF(0) - the membrane proton channel. CF(1) has five subunits: alpha(3), beta(3), gamma(1), delta(1), epsilon(1). CF(0) has three main subunits: a(1), b(2) and c(9-12). The alpha and beta chains form an alternating ring which encloses part of the gamma chain. CF(1) is attached to CF(0) by a central stalk formed by the gamma and epsilon chains, while a peripheral stalk is formed by the delta and b chains.

Its subcellular location is the cell inner membrane. It catalyses the reaction ATP + H2O + 4 H(+)(in) = ADP + phosphate + 5 H(+)(out). Functionally, produces ATP from ADP in the presence of a proton gradient across the membrane. The alpha chain is a regulatory subunit. This is ATP synthase subunit alpha from Nitrobacter hamburgensis (strain DSM 10229 / NCIMB 13809 / X14).